The primary structure comprises 1514 residues: Neurexin-1 (1514 aa).

Positions Met-1 to Gly-30 are cleaved as a signal peptide. The Laminin G-like 1 domain maps to Leu-31–Cys-217. Topologically, residues Leu-31–Thr-1438 are extracellular. Residues Asn-125 and Asn-190 are each glycosylated (N-linked (GlcNAc...) asparagine). A disordered region spans residues Val-197–Glu-221. Residues Ala-219–Ser-256 form the EGF-like 1 domain. Intrachain disulfides connect Cys-228–Cys-243 and Cys-245–Cys-255. Laminin G-like domains are found at residues Ile-283–Cys-480 and Asp-487–Cys-679. Residues Asp-329, Leu-346, and Met-414 each coordinate Ca(2+). 5 cysteine pairs are disulfide-bonded: Cys-444–Cys-480, Cys-650–Cys-679, Cys-687–Cys-698, Cys-692–Cys-707, and Cys-709–Cys-719. One can recognise an EGF-like 2 domain in the interval Thr-683–Glu-720. 2 consecutive Laminin G-like domains span residues Val-725–Cys-898 and Asp-912–Cys-1087. Ca(2+) is bound by residues Asp-772 and Leu-789. Asn-797 carries N-linked (GlcNAc...) asparagine glycosylation. Arg-848 lines the Ca(2+) pocket. Intrachain disulfides connect Cys-890–Cys-898, Cys-1059–Cys-1087, Cys-1094–Cys-1105, Cys-1099–Cys-1114, and Cys-1116–Cys-1126. The region spanning Pro-1090 to Asn-1127 is the EGF-like 3 domain. Positions Tyr-1133 to Val-1331 constitute a Laminin G-like 6 domain. The Ca(2+) site is built by Asp-1183 and Val-1200. A glycan (N-linked (GlcNAc...) asparagine) is linked at Asn-1230. Ca(2+) contacts are provided by Ile-1282 and Asn-1284. O-linked (Xyl...) (heparan sulfate) serine glycosylation occurs at Ser-1392. Residues Pro-1396–Ser-1427 form a disordered region. The helical transmembrane segment at Gly-1439–Met-1459 threads the bilayer. Residues Tyr-1460 to Val-1514 lie on the Cytoplasmic side of the membrane. The interval Asn-1481–Asn-1507 is interaction with CASK. Residues Asn-1481–Val-1514 form a disordered region.

It belongs to the neurexin family. In terms of assembly, interacts (via laminin G-like domain 2 and/or laminin G-like domain 6) with NLGN1 forming a heterotetramer, where one NLGN1 dimer interacts with one NRXN1 dimer. Also interacts (via laminin G-like domain 2 and/or laminin G-like domain 6) with NLGN2, NLGN3 and NLGN4L; interactions with NLGN1, NLGN2, NLGN3 and NLGN4L are calcium-dependent. Interacts (via cytoplasmic C-terminal region) with CASK (via the PDZ, SH3 and guanylate kinase-like domains). Interacts (via cytoplasmic C-terminus) with CASKIN1 and APBA1. Interacts (via laminin G-like domain 2) with NXPH1 and NXPH3. Alpha-type isoforms (neurexin-1-alpha) interact (via laminin G-like domain 2 and/or laminin G-like domain 6) with DAG1 (via alpha-dystroglycan chain). Interacts with LRRTM1, LRRTM2, LRRTM3 and LRRTM4. Interacts with SYT13 and SYTL1. Interacts with CBLN1, CBLN2 and, less avidly, with CBLN4. Interacts with CLSTN3. In terms of processing, O-glycosylated; contains heparan sulfate. Heparan sulfate attachment is required for synapse development by mediating interactions with neuroligins and LRRTM2.

It is found in the presynaptic cell membrane. Its function is as follows. Cell surface protein involved in cell-cell-interactions, exocytosis of secretory granules and regulation of signal transmission. Function is isoform-specific. Alpha-type isoforms have a long N-terminus with six laminin G-like domains and play an important role in synaptic signal transmission. Alpha-type isoforms play a role in the regulation of calcium channel activity and Ca(2+)-triggered neurotransmitter release at synapses and at neuromuscular junctions. They play an important role in Ca(2+)-triggered exocytosis of secretory granules in pituitary gland. They may affect their functions at synapses and in endocrine cells via their interactions with proteins from the exocytotic machinery. Likewise, alpha-type isoforms play a role in regulating the activity of postsynaptic NMDA receptors, a subtype of glutamate-gated ion channels. Both alpha-type and beta-type isoforms may play a role in the formation or maintenance of synaptic junctions via their interactions (via the extracellular domains) with neuroligin family members, CBLN1 or CBLN2. In vitro, triggers the de novo formation of presynaptic structures. May be involved in specification of excitatory synapses. Alpha-type isoforms were first identified as receptors for alpha-latrotoxin from spider venom. This chain is Neurexin-1 (Nrxn1), found in Mus musculus (Mouse).